Consider the following 196-residue polypeptide: Transmembrane protein 126A (196 aa).

The Mitochondrial matrix portion of the chain corresponds to 1–34; sequence MESHKPSTNKDDLIFNIIPRKIKQLPESDRNLLE. A helical transmembrane segment spans residues 35 to 55; the sequence is YGSAYIGLNAAFGGLIANSLF. Residues 56–57 lie on the Mitochondrial intermembrane side of the membrane; the sequence is RR. The helical transmembrane segment at 58–78 threads the bilayer; that stretch reads ILNVTQARVASSLPMAVIPFL. Topologically, residues 79–106 are mitochondrial matrix; it reads TANLSYHSFVSLPLSTGNLNCEICTTTR. The helical transmembrane segment at 107 to 127 threads the bilayer; that stretch reads GTLVGFVLGGLYPILLAIPVN. The Mitochondrial intermembrane portion of the chain corresponds to 128-159; that stretch reads GGLAARYESSPLPQRGNIFNYWITISKPVFRK. The helical transmembrane segment at 160-176 threads the bilayer; that stretch reads MLFPTLLQTAFAAYLGS. The Mitochondrial matrix portion of the chain corresponds to 177–196; it reads RQYKLLIKALQLPEPDLEIQ.

It belongs to the TMEM126 family. Interacts with OXA1L; promoting cotranslational quality control in mitochondria.

It localises to the mitochondrion inner membrane. Its function is as follows. Protein required for the cotranslational protein quality control in the inner membrane of the mitochondria. Associates with newly synthesized polypeptides and may act as a chaperone that cooperates with OXA1L for the insertion of newly synthesized mitochondrial proteins into the inner membrane. Required for the assembly of the ND4 module of mitochondrial complex I. This Rattus norvegicus (Rat) protein is Transmembrane protein 126A (Tmem126a).